The chain runs to 394 residues: Elongation factor Tu (394 aa).

Positions 10–204 (KPHINIGTIG…AVDDNIPTPE (195 aa)) constitute a tr-type G domain. Residues 19 to 26 (GHVDHGKT) are G1. Residue 19–26 (GHVDHGKT) coordinates GTP. T26 contributes to the Mg(2+) binding site. Residues 60-64 (GITIN) are G2. Residues 81–84 (DCPG) form a G3 region. GTP-binding positions include 81–85 (DCPGH) and 136–139 (NKID). A G4 region spans residues 136–139 (NKID). Residues 174-176 (SAL) are G5.

This sequence belongs to the TRAFAC class translation factor GTPase superfamily. Classic translation factor GTPase family. EF-Tu/EF-1A subfamily. As to quaternary structure, monomer.

The protein localises to the cytoplasm. The enzyme catalyses GTP + H2O = GDP + phosphate + H(+). In terms of biological role, GTP hydrolase that promotes the GTP-dependent binding of aminoacyl-tRNA to the A-site of ribosomes during protein biosynthesis. The polypeptide is Elongation factor Tu (Chlamydia abortus (strain DSM 27085 / S26/3) (Chlamydophila abortus)).